The primary structure comprises 190 residues: RNA-binding protein OPG065 (190 aa).

The 66-residue stretch at 5-70 folds into the Z-binding domain; it reads YIDERSNAEI…DIPPRWFMTT (66 aa). Positions 117 to 184 constitute a DRBM domain; that stretch reads NPVTVINEYC…AKLAVDKLLG (68 aa).

Belongs to the orthopoxvirus OPG065 family. As to quaternary structure, interacts with host G1P2/ISG15. Interacts with host EIF2AK2/PKR. Interacts with host ZBP1.

Functionally, RNA-binding protein that plays a role in the inhibition of multiple cellular antiviral responses activated by double-stranded RNA (dsRNA), such as inhibition of PKR activation, necroptosis, and IFN-mediated antiviral activities. Recognizes and binds Z-RNA structures via its Z-binding domain and dsRNA via its DRBM domain: RNA-binding activity is required to escape host ZBP1-dependent necroptosis. Mechanistically, the Z-binding domain binds Z-RNAs that are produced during vaccinia virus infection, thereby competing with Z-RNA detection by host ZBP1, suppressing ZBP1-dependent necroptosis. Acts as a key inhibitor of the interferon response by blocking the phosphorylation and subsequent activation of IRF3 and IRF7 kinases that are required for interferon-alpha gene expression. Inhibits NF-kappa-B activation and the ubiquitin-like protein ISG15, which is an early antiviral protein. The binding with host ISG15 subsequently blocks host ISGylation. The chain is RNA-binding protein OPG065 (OPG065) from Vaccinia virus (strain Western Reserve) (VACV).